The sequence spans 114 residues: Hemerythrin subunit 1 (114 aa).

Fe cation contacts are provided by His26, His55, Glu59, His74, His78, His102, and Asp107.

The protein belongs to the hemerythrin family.

In terms of biological role, hemerythrin is a respiratory protein in blood cells of certain marine worms. The oxygen-binding site in each chain contains two iron atoms. This chain is Hemerythrin subunit 1, found in Golfingia vulgaris (Marine worm).